Reading from the N-terminus, the 322-residue chain is Cysteine protease YopT (322 aa).

The tract at residues 43-72 (SHSNRQKKLSATIKHNQSSRSMLDRKLTSD) is disordered. Catalysis depends on residues cysteine 139, histidine 258, and aspartate 274.

Belongs to the peptidase C58 family. Interacts with human ARHA.

It localises to the secreted. Its function is as follows. Cysteine protease, which is translocated into infected cells and plays a central role in pathogenesis by cleaving the C-terminus end of the human small GTPase RhoA/ARHA, a regulator of cytoskeleton. Once cleaved, ARHA loses its lipid modification, and is released from the cell membrane, leading to the subsequent disruption of actin cytoskeleton of the host cell. This Yersinia enterocolitica protein is Cysteine protease YopT (yopT).